The primary structure comprises 1165 residues: Vacuolar segregation protein 7 (1165 aa).

Topologically, residues 1-919 (MTEEDRKLTV…RKSPFVKVKN (919 aa)) are cytoplasmic. The tract at residues 118–147 (SVSSTNNNSNNALINHNPLSSHLSNPSSSL) is disordered. Ser164 is modified (phosphoserine). Disordered regions lie at residues 215-241 (SNNT…LPSL), 274-423 (KAKN…SEKP), 461-497 (LIFP…SAPL), and 560-668 (EPPH…KRPL). Positions 216–230 (NNTAPSTSNNIGSNT) are enriched in polar residues. The span at 334 to 345 (TTSTKTAPSTAP) shows a compositional bias: low complexity. Residues 346 to 367 (LGSTDNTQALTASVSSSNADNH) show a composition bias toward polar residues. Residues 375-391 (SSNNNGNNSNSASNKTN) are compositionally biased toward low complexity. The segment covering 393 to 412 (DIKNSNADLSASTSNNNAIN) has biased composition (polar residues). Basic and acidic residues predominate over residues 413–423 (DDSHESNSEKP). 2 stretches are compositionally biased toward low complexity: residues 469 to 485 (QQQQ…QQQQ) and 562 to 571 (PHQLQQQQPP). The segment covering 576-587 (SVDSYTSDNPDS) has biased composition (polar residues). The segment covering 599–613 (SLVSLSKVSPHLLSS) has biased composition (low complexity). Over residues 614–662 (TSSNGNTISCPNVATNSQELEPNNDISTKKSLSNSTLRHSSANRNSNYG) the composition is skewed to polar residues. The chain crosses the membrane as a helical; Signal-anchor for type II membrane protein span at residues 920 to 940 (FLYLAFVISSLLMTGFILGFL). Over 941–1165 (LATNKELQDV…KDSMVHPGKK (225 aa)) the chain is Vacuolar. Residues Asn1020 and Asn1099 are each glycosylated (N-linked (GlcNAc...) asparagine). The disordered stretch occupies residues 1074–1121 (SPGSREAKHENDDDDDDDGDDGDDENNTNERQYKSKPNARDDKEDDTK). Residues 1085-1100 (DDDDDDDGDDGDDENN) show a composition bias toward acidic residues. Basic and acidic residues predominate over residues 1111–1121 (NARDDKEDDTK).

In terms of assembly, component of the PI(3,5)P2 regulatory complex, composed of ATG18, FIG4, FAB1, VAC14 and VAC7. VAC14 nucleates the assembly of the complex and serves as a scaffold. N-glycosylated.

The protein resides in the vacuole membrane. Functionally, the PI(3,5)P2 regulatory complex regulates both the synthesis and turnover of phosphatidylinositol 3,5-bisphosphate (PtdIns(3,5)P2). Positively regulates FAB1 kinase activity. Major activator of FAB1 during hyperosmotic shock and can elevate levels of PtdIns(3,5)P2 in the absence of VAC14 and FIG4. Directly involved in vacuolar membrane scission. Required for normal vacuole acidification, inheritance and morphology. This Saccharomyces cerevisiae (strain ATCC 204508 / S288c) (Baker's yeast) protein is Vacuolar segregation protein 7 (VAC7).